A 322-amino-acid polypeptide reads, in one-letter code: MSRQPPIRIGARGSKLSLAQSGLMQARIAHALGVPAGASKDEIEAAAPLIPIVTSGDRIQDRRLMEIGGKGLFTKEIEEALLDGRIDCAVHSLKDMPAELPPGLVLAATPEREDPRDAFISHVCERLEDLPKGARLGTASLRRQAQALHVRPDLEIVMLRGNVDTRLAKLERGEADAILLAQSGLNRLGLGHLTRSWLDPDACPPAPGQGALVIETRAEDIGAPWLEAVRCRQTTIAVAAERGALLALEGSCRTAIGARAILDGARLSMIVEALTPDGAQRFRREGDITLTGADDIAEARAFGLTLGAEVRAAGGDAIILPE.

At Cys252 the chain carries S-(dipyrrolylmethanemethyl)cysteine.

This sequence belongs to the HMBS family. In terms of assembly, monomer. Requires dipyrromethane as cofactor.

It catalyses the reaction 4 porphobilinogen + H2O = hydroxymethylbilane + 4 NH4(+). Its pathway is porphyrin-containing compound metabolism; protoporphyrin-IX biosynthesis; coproporphyrinogen-III from 5-aminolevulinate: step 2/4. Functionally, tetrapolymerization of the monopyrrole PBG into the hydroxymethylbilane pre-uroporphyrinogen in several discrete steps. In Caulobacter vibrioides (strain ATCC 19089 / CIP 103742 / CB 15) (Caulobacter crescentus), this protein is Porphobilinogen deaminase.